The primary structure comprises 222 residues: Charged multivesicular body protein 4b (222 aa).

Disordered regions lie at residues 1–21 (MSLI…PSPQ) and 177–222 (NLLE…WATA). Residues 21-182 (QEAIQKLRDT…ELDKNLLEVQ (162 aa)) adopt a coiled-coil conformation.

The protein belongs to the SNF7 family. As to quaternary structure, probable core component of the endosomal sorting required for transport complex III (ESCRT-III). ESCRT-III components are thought to multimerize to form a flat lattice on the perimeter membrane of the endosome.

It is found in the cytoplasm. The protein resides in the cytosol. The protein localises to the late endosome membrane. Its subcellular location is the midbody. In terms of biological role, probable core component of the endosomal sorting required for transport complex III (ESCRT-III) which is involved in multivesicular bodies (MVBs) formation and sorting of endosomal cargo proteins into MVBs. MVBs contain intraluminal vesicles (ILVs) that are generated by invagination and scission from the limiting membrane of the endosome and mostly are delivered to lysosomes enabling degradation of membrane proteins, such as stimulated growth factor receptors, lysosomal enzymes and lipids. This chain is Charged multivesicular body protein 4b (chmp4b), found in Xenopus laevis (African clawed frog).